Reading from the N-terminus, the 143-residue chain is Large ribosomal subunit protein uL13 (143 aa).

It belongs to the universal ribosomal protein uL13 family. Part of the 50S ribosomal subunit.

Functionally, this protein is one of the early assembly proteins of the 50S ribosomal subunit, although it is not seen to bind rRNA by itself. It is important during the early stages of 50S assembly. The polypeptide is Large ribosomal subunit protein uL13 (Rubrobacter xylanophilus (strain DSM 9941 / JCM 11954 / NBRC 16129 / PRD-1)).